The following is a 707-amino-acid chain: E3 ubiquitin-protein ligase Praja-2 (707 aa).

Basic and acidic residues predominate over residues 1 to 10; the sequence is MSQYTEKEPS. Disordered regions lie at residues 1-23, 75-120, and 242-290; these read MSQY…AWPR, NTAG…PSVA, and AGDA…CVPG. N-acetylserine is present on serine 2. Residues 109–119 show a composition bias toward polar residues; the sequence is LNQSTESNPSV. Positions 246-276 are enriched in basic and acidic residues; the sequence is EAVHQDGQEFQRSSEDGIVRKRRQDDTDQGR. A phosphoserine mark is found at serine 306 and serine 320. Residue serine 339 is modified to Phosphoserine; by PKA. Disordered stretches follow at residues 380-403 and 424-493; these read VTPR…GRQE and EDSS…QTSL. The segment covering 381–391 has biased composition (basic and acidic residues); it reads TPREAERHRAT. Residue serine 430 is modified to Phosphoserine. The span at 465-481 shows a compositional bias: acidic residues; sequence NEPELQSDSSGPEEENQ. Residues 482-491 show a composition bias toward polar residues; sequence ELSLQEGEQT. An interaction with PRKAR1A, PRKAR2A and PRKAR2B region spans residues 530-707; the sequence is DGNNNLEDDS…PANDNAEEAP (178 aa). The tract at residues 549 to 569 is mediates interaction with TBC1D31; sequence WSLFDGFADGLGVAEAISYVD. The RING-type; atypical zinc-finger motif lies at 633-674; it reads CPICCSEYIKDDIATELPCHHFFHKPCVSIWLQKSGTCPVCR. Residues 686–707 are disordered; it reads AAASSEPDLDASPANDNAEEAP.

As to quaternary structure, binds ubiquitin-conjugating enzymes (E2s). In vitro, interacts with the ubiquitin-conjugating enzyme, UBE2D2. The phosphorylated form interacts with PRKAR1A, PRKAR2A and PRKAR2B. Binds the catalytic subunits of cAMP-dependent protein kinase. Interacts with MFHAS1. Interacts with TBC1D31; the interaction is direct and recruits PJA2 to centrosomes. Highly expressed in the brain, in nerve cells but not in glial cells. Abundantly expressed in pyramidal neurons and in the CA3 region of apical dendrites. Colocalizes with PRKAR2B in dentate granule cells and at postsynaptic sites of primary hippocampal neurons.

The protein resides in the cytoplasm. It is found in the cell membrane. Its subcellular location is the endoplasmic reticulum membrane. The protein localises to the golgi apparatus membrane. It localises to the synapse. The protein resides in the postsynaptic density. It is found in the cytoskeleton. Its subcellular location is the microtubule organizing center. The protein localises to the centrosome. The enzyme catalyses S-ubiquitinyl-[E2 ubiquitin-conjugating enzyme]-L-cysteine + [acceptor protein]-L-lysine = [E2 ubiquitin-conjugating enzyme]-L-cysteine + N(6)-ubiquitinyl-[acceptor protein]-L-lysine.. Its pathway is protein modification; protein ubiquitination. Has E2-dependent E3 ubiquitin-protein ligase activity. Responsible for ubiquitination of cAMP-dependent protein kinase type I and type II-alpha/beta regulatory subunits and for targeting them for proteasomal degradation. Essential for PKA-mediated long-term memory processes. Through the ubiquitination of MFHAS1, positively regulates the TLR2 signaling pathway that leads to the activation of the downstream p38 and JNK MAP kinases and promotes the polarization of macrophages toward the pro-inflammatory M1 phenotype. Plays a role in ciliogenesis by ubiquitinating OFD1. The chain is E3 ubiquitin-protein ligase Praja-2 (Pja2) from Rattus norvegicus (Rat).